Consider the following 322-residue polypeptide: Undecaprenyl-phosphate 4-deoxy-4-formamido-L-arabinose transferase (322 aa).

The Cytoplasmic portion of the chain corresponds to 1–235; the sequence is MFEIHPVKKV…TCLTTTPLRM (235 aa). The helical transmembrane segment at 236-256 threads the bilayer; it reads LSLLGSIIAIGGFSIAVLLVI. At 257-269 the chain is on the periplasmic side; that stretch reads LRLTFGPQWAAEG. A helical membrane pass occupies residues 270-290; it reads VFMLFAVLFTFIGAQFIGMGL. Topologically, residues 291–322 are cytoplasmic; sequence LGEYIGRIYTDVRARPRYFVQQVIRPSSKENE.

This sequence belongs to the glycosyltransferase 2 family.

It localises to the cell inner membrane. The enzyme catalyses UDP-4-deoxy-4-formamido-beta-L-arabinose + di-trans,octa-cis-undecaprenyl phosphate = 4-deoxy-4-formamido-alpha-L-arabinopyranosyl di-trans,octa-cis-undecaprenyl phosphate + UDP. It functions in the pathway glycolipid biosynthesis; 4-amino-4-deoxy-alpha-L-arabinose undecaprenyl phosphate biosynthesis; 4-amino-4-deoxy-alpha-L-arabinose undecaprenyl phosphate from UDP-4-deoxy-4-formamido-beta-L-arabinose and undecaprenyl phosphate: step 1/2. The protein operates within bacterial outer membrane biogenesis; lipopolysaccharide biosynthesis. Its function is as follows. Catalyzes the transfer of 4-deoxy-4-formamido-L-arabinose from UDP to undecaprenyl phosphate. The modified arabinose is attached to lipid A and is required for resistance to polymyxin and cationic antimicrobial peptides. The sequence is that of Undecaprenyl-phosphate 4-deoxy-4-formamido-L-arabinose transferase from Escherichia coli O7:K1 (strain IAI39 / ExPEC).